A 372-amino-acid chain; its full sequence is PqqA peptide cyclase (372 aa).

The Radical SAM core domain maps to 4–219 (APPPLSVLLE…VDTARRELGD (216 aa)). Positions 18, 22, and 25 each coordinate [4Fe-4S] cluster. The interval 342-372 (ATAEREAAAPAPEFIYRRPERPAPATADTLE) is disordered.

This sequence belongs to the radical SAM superfamily. PqqE family. In terms of assembly, interacts with PqqD. The interaction is necessary for activity of PqqE. [4Fe-4S] cluster serves as cofactor.

The catalysed reaction is [PQQ precursor protein] + S-adenosyl-L-methionine = E-Y cross-linked-[PQQ precursor protein] + 5'-deoxyadenosine + L-methionine + H(+). It participates in cofactor biosynthesis; pyrroloquinoline quinone biosynthesis. Catalyzes the cross-linking of a glutamate residue and a tyrosine residue in the PqqA protein as part of the biosynthesis of pyrroloquinoline quinone (PQQ). This Xanthomonas oryzae pv. oryzae (strain MAFF 311018) protein is PqqA peptide cyclase.